The primary structure comprises 411 residues: Arginine deiminase (411 aa).

Residue Cys-401 is the Amidino-cysteine intermediate of the active site.

Belongs to the arginine deiminase family.

The protein resides in the cytoplasm. It catalyses the reaction L-arginine + H2O = L-citrulline + NH4(+). It functions in the pathway amino-acid degradation; L-arginine degradation via ADI pathway; carbamoyl phosphate from L-arginine: step 1/2. This chain is Arginine deiminase, found in Staphylococcus haemolyticus (strain JCSC1435).